The following is a 137-amino-acid chain: Large ribosomal subunit protein uL16 (137 aa).

It belongs to the universal ribosomal protein uL16 family. As to quaternary structure, part of the 50S ribosomal subunit.

Binds 23S rRNA and is also seen to make contacts with the A and possibly P site tRNAs. The chain is Large ribosomal subunit protein uL16 from Roseobacter denitrificans (strain ATCC 33942 / OCh 114) (Erythrobacter sp. (strain OCh 114)).